A 141-amino-acid polypeptide reads, in one-letter code: Large ribosomal subunit protein uL16 (141 aa).

It belongs to the universal ribosomal protein uL16 family. In terms of assembly, part of the 50S ribosomal subunit.

Functionally, binds 23S rRNA and is also seen to make contacts with the A and possibly P site tRNAs. In Petrotoga mobilis (strain DSM 10674 / SJ95), this protein is Large ribosomal subunit protein uL16.